Reading from the N-terminus, the 152-residue chain is Putative pre-16S rRNA nuclease (152 aa).

This sequence belongs to the YqgF nuclease family.

The protein localises to the cytoplasm. In terms of biological role, could be a nuclease involved in processing of the 5'-end of pre-16S rRNA. This chain is Putative pre-16S rRNA nuclease, found in Sphingopyxis alaskensis (strain DSM 13593 / LMG 18877 / RB2256) (Sphingomonas alaskensis).